A 947-amino-acid polypeptide reads, in one-letter code: Protocadherin alpha-4 (947 aa).

The signal sequence occupies residues 1–29 (MEFSWGSGQESRRLLLLLLLLAAWEAGNG). Cadherin domains are found at residues 30–133 (QLHY…PPVF), 134–242 (PATQ…APAF), 243–350 (DRTI…VPDL), 351–455 (EFKS…APAF), 456–565 (AQPE…APAL), and 588–678 (GHVV…APKA). The Extracellular segment spans residues 30–697 (QLHYSVSEEA…GPDAALVDVN (668 aa)). Cysteines 96 and 102 form a disulfide. N-linked (GlcNAc...) asparagine glycosylation is found at N139, N257, and N265. A glycan (N-linked (GlcNAc...) asparagine) is linked at N548. The chain crosses the membrane as a helical span at residues 698–718 (VYLIIAICAVSSLLVLTLLLY). Residues 719–947 (TALRCSALPT…GNSTTDNSDQ (229 aa)) lie on the Cytoplasmic side of the membrane. PXXP repeat units follow at residues 734–737 (PGKP), 774–777 (PSLP), 796–799 (PRQP), 829–832 (PGGP), 870–873 (PGNP), and 888–891 (PGSP). The interval 734–891 (PGKPTLVCSS…PDKFIIPGSP (158 aa)) is 6 X 4 AA repeats of P-X-X-P. A required for interaction with FYN region spans residues 738-947 (TLVCSSAVGS…GNSTTDNSDQ (210 aa)). Disordered regions lie at residues 754–805 (RRPR…DWRY), 828–853 (GPGGPDQQWPTVSSATPEPEAGEVSP), and 868–947 (YGPG…NSDQ). A compositionally biased stretch (basic and acidic residues) spans 906 to 920 (DKSDFITFGKKEETK).

As to quaternary structure, forms homodimers in trans (molecules expressed by two different cells). Forms promiscuous heterodimers in cis (at the plasma membrane of the same cell) with other protocadherins. Interacts with FYN.

The protein localises to the cell membrane. Calcium-dependent cell-adhesion protein involved in cells self-recognition and non-self discrimination. Thereby, it is involved in the establishment and maintenance of specific neuronal connections in the brain. In Homo sapiens (Human), this protein is Protocadherin alpha-4.